A 327-amino-acid chain; its full sequence is Biotin synthase (327 aa).

The region spanning 52-279 (NAIQRSTLLS…TSWVRLSAGR (228 aa)) is the Radical SAM core domain. The [4Fe-4S] cluster site is built by C67, C71, and C74. [2Fe-2S] cluster is bound by residues C111, C142, C202, and R274.

It belongs to the radical SAM superfamily. Biotin synthase family. Homodimer. The cofactor is [4Fe-4S] cluster. [2Fe-2S] cluster serves as cofactor.

It catalyses the reaction (4R,5S)-dethiobiotin + (sulfur carrier)-SH + 2 reduced [2Fe-2S]-[ferredoxin] + 2 S-adenosyl-L-methionine = (sulfur carrier)-H + biotin + 2 5'-deoxyadenosine + 2 L-methionine + 2 oxidized [2Fe-2S]-[ferredoxin]. Its pathway is cofactor biosynthesis; biotin biosynthesis; biotin from 7,8-diaminononanoate: step 2/2. Catalyzes the conversion of dethiobiotin (DTB) to biotin by the insertion of a sulfur atom into dethiobiotin via a radical-based mechanism. The protein is Biotin synthase of Dechloromonas aromatica (strain RCB).